Reading from the N-terminus, the 307-residue chain is Serine/threonine-protein phosphatase PP2A-3 catalytic subunit (307 aa).

Residues D55, H57, D83, and N115 each contribute to the Mn(2+) site. The active-site Proton donor is H116. Residues H165 and H239 each contribute to the Mn(2+) site.

This sequence belongs to the PPP phosphatase family. PP-2A subfamily. It depends on Mn(2+) as a cofactor.

Its subcellular location is the cytoplasm. The enzyme catalyses O-phospho-L-seryl-[protein] + H2O = L-seryl-[protein] + phosphate. It carries out the reaction O-phospho-L-threonyl-[protein] + H2O = L-threonyl-[protein] + phosphate. The polypeptide is Serine/threonine-protein phosphatase PP2A-3 catalytic subunit (PP2A3) (Oryza sativa subsp. indica (Rice)).